A 376-amino-acid polypeptide reads, in one-letter code: Carbohydrate sulfotransferase 14 (376 aa).

The Cytoplasmic portion of the chain corresponds to 1 to 39 (MFPRPLTPLAAPNGAEPLGRALRRAPLGRARAGLGGPPL). The chain crosses the membrane as a helical; Signal-anchor for type II membrane protein span at residues 40–60 (LLPSMLMFAVIVASSGLLLMI). At 61 to 376 (ERGILAEMKP…PNVTKEACQQ (316 aa)) the chain is on the lumenal side. A glycan (N-linked (GlcNAc...) asparagine) is linked at asparagine 110. 3'-phosphoadenylyl sulfate-binding positions include 155-161 (PKVACSN) and 213-221 (REPLERLLS). N-linked (GlcNAc...) asparagine glycosylation is present at asparagine 368.

It belongs to the sulfotransferase 2 family. Widely expressed. Expressed at high level in pituitary gland, placenta, uterus and thyroid.

It is found in the golgi apparatus membrane. The enzyme catalyses dermatan + n 3'-phosphoadenylyl sulfate = dermatan 4'-sulfate + n adenosine 3',5'-bisphosphate + n H(+). In terms of biological role, catalyzes the transfer of sulfate to position 4 of the N-acetylgalactosamine (GalNAc) residue of dermatan sulfate. Plays a pivotal role in the formation of 4-0-sulfated IdoA blocks in dermatan sulfate. Transfers sulfate to the C-4 hydroxyl of beta1,4-linked GalNAc that is substituted with an alpha-linked iduronic acid (IdoUA) at the C-3 hydroxyl. Transfers sulfate more efficiently to GalNAc residues in -IdoUA-GalNAc-IdoUA- than in -GlcUA-GalNAc-GlcUA-sequences. Has preference for partially desulfated dermatan sulfate. Addition of sulfate to GalNAc may occur immediately after epimerization of GlcUA to IdoUA. Appears to have an important role in the formation of the cerebellar neural network during postnatal brain development. In Homo sapiens (Human), this protein is Carbohydrate sulfotransferase 14 (CHST14).